Reading from the N-terminus, the 282-residue chain is Shikimate dehydrogenase (NADP(+)) (282 aa).

Shikimate contacts are provided by residues serine 16 to serine 18 and threonine 63. Lysine 67 (proton acceptor) is an active-site residue. Shikimate is bound by residues asparagine 88 and aspartate 103. Residues glycine 128–alanine 132 and glycine 243 contribute to the NADP(+) site.

The protein belongs to the shikimate dehydrogenase family. Homodimer.

It catalyses the reaction shikimate + NADP(+) = 3-dehydroshikimate + NADPH + H(+). It participates in metabolic intermediate biosynthesis; chorismate biosynthesis; chorismate from D-erythrose 4-phosphate and phosphoenolpyruvate: step 4/7. Involved in the biosynthesis of the chorismate, which leads to the biosynthesis of aromatic amino acids. Catalyzes the reversible NADPH linked reduction of 3-dehydroshikimate (DHSA) to yield shikimate (SA). This Xylella fastidiosa (strain 9a5c) protein is Shikimate dehydrogenase (NADP(+)).